We begin with the raw amino-acid sequence, 922 residues long: DNA gyrase subunit A (922 aa).

Positions 1-14 are enriched in low complexity; sequence MTETPTDGGSTPPS. Residues 1-24 form a disordered region; the sequence is MTETPTDGGSTPPSDGGGPGGRIE. Residues 49–518 enclose the Topo IIA-type catalytic domain; that stretch reads LPDVRDGLKP…ADGDLSMEDL (470 aa). The active-site O-(5'-phospho-DNA)-tyrosine intermediate is tyrosine 137. The short motif at 545–551 is the GyrA-box element; it reads QRRGGKG. A disordered region spans residues 861-922; the sequence is EANGDDELDE…TEPDPGESDG (62 aa). Acidic residues-rich tracts occupy residues 863–890 and 912–922; these read NGDD…DESA and DTEPDPGESDG.

Belongs to the type II topoisomerase GyrA/ParC subunit family. As to quaternary structure, heterotetramer, composed of two GyrA and two GyrB chains. In the heterotetramer, GyrA contains the active site tyrosine that forms a transient covalent intermediate with DNA, while GyrB binds cofactors and catalyzes ATP hydrolysis.

The protein localises to the cytoplasm. The catalysed reaction is ATP-dependent breakage, passage and rejoining of double-stranded DNA.. Its function is as follows. A type II topoisomerase that negatively supercoils closed circular double-stranded (ds) DNA in an ATP-dependent manner to modulate DNA topology and maintain chromosomes in an underwound state. Negative supercoiling favors strand separation, and DNA replication, transcription, recombination and repair, all of which involve strand separation. Also able to catalyze the interconversion of other topological isomers of dsDNA rings, including catenanes and knotted rings. Type II topoisomerases break and join 2 DNA strands simultaneously in an ATP-dependent manner. This Nocardioides sp. (strain ATCC BAA-499 / JS614) protein is DNA gyrase subunit A.